The sequence spans 139 residues: Myosin light chain kinase, smooth muscle (139 aa).

The interval 48-97 (APTGENAKAPEMKARRPKSSLPPVLGTESDATVKKKPAPKTPPKAAMPPQ) is disordered.

The protein belongs to the protein kinase superfamily. CAMK Ser/Thr protein kinase family. As to quaternary structure, interacts with SVIL. The C-terminus is deglutamylated by AGTPBP1/CCP1, AGBL1/CCP4 and AGBL4/CCP6, leading to the formation of Myosin light chain kinase, smooth muscle, deglutamylated form. The consequences of C-terminal deglutamylation are unknown.

It carries out the reaction L-seryl-[myosin light chain] + ATP = O-phospho-L-seryl-[myosin light chain] + ADP + H(+). It catalyses the reaction L-threonyl-[myosin light chain] + ATP = O-phospho-L-threonyl-[myosin light chain] + ADP + H(+). Phosphorylates a specific serine in the N-terminus of a myosin light chain. Also regulates actin-myosin interaction through a non-kinase activity. This chain is Myosin light chain kinase, smooth muscle (MYLK), found in Sus scrofa (Pig).